The primary structure comprises 753 residues: 5-methyltetrahydropteroyltriglutamate--homocysteine methyltransferase (753 aa).

5-methyltetrahydropteroyltri-L-glutamate-binding positions include 17–20 and Lys117; that span reads RELK. Residues 431-433 and Glu484 each bind L-homocysteine; that span reads IGS. L-methionine-binding positions include 431 to 433 and Glu484; that span reads IGS. Residues 515–516 and Trp561 each bind 5-methyltetrahydropteroyltri-L-glutamate; that span reads RC. Asp599 provides a ligand contact to L-homocysteine. Asp599 serves as a coordination point for L-methionine. Glu605 is a 5-methyltetrahydropteroyltri-L-glutamate binding site. The Zn(2+) site is built by His641, Cys643, and Glu665. Residue His694 is the Proton donor of the active site. Zn(2+) is bound at residue Cys726.

Belongs to the vitamin-B12 independent methionine synthase family. The cofactor is Zn(2+).

It carries out the reaction 5-methyltetrahydropteroyltri-L-glutamate + L-homocysteine = tetrahydropteroyltri-L-glutamate + L-methionine. Its pathway is amino-acid biosynthesis; L-methionine biosynthesis via de novo pathway; L-methionine from L-homocysteine (MetE route): step 1/1. Its function is as follows. Catalyzes the transfer of a methyl group from 5-methyltetrahydrofolate to homocysteine resulting in methionine formation. This is 5-methyltetrahydropteroyltriglutamate--homocysteine methyltransferase from Citrobacter koseri (strain ATCC BAA-895 / CDC 4225-83 / SGSC4696).